The following is a 95-amino-acid chain: Large ribosomal subunit protein eL31 (95 aa).

The protein belongs to the eukaryotic ribosomal protein eL31 family.

In Pyrococcus horikoshii (strain ATCC 700860 / DSM 12428 / JCM 9974 / NBRC 100139 / OT-3), this protein is Large ribosomal subunit protein eL31 (rpl31e).